We begin with the raw amino-acid sequence, 249 residues long: MKLLLILGSVIALPTFAAGGGDLDASDYTGVSFWLVTAALLASTVFFFVERDRVSAKWKTSLTVSGLVTGIAFWHYMYMRGVWIETGDSPTVFRYIDWLLTVPLLICEFYLILAAATNVAGSLFKKLLVGSLVMLVFGYMGEAGIMAAWPAFIIGCLAWVYMIYELWAGEGKSACNTASPAVQSAYNTMMYIIIFGWAIYPVGYFTGYLMGDGGSALNLNLIYNLADFVNKILFGLIIWNVAVKESSNA.

An N-terminal signal peptide occupies residues 1–17; it reads MKLLLILGSVIALPTFA. 7 helical membrane-spanning segments follow: residues 30–49, 62–84, 99–121, 128–147, 151–168, 189–211, and 221–243; these read GVSF…FFFV, LTVS…GVWI, LLTV…NVAG, LVGS…GIMA, AFII…ELWA, MMYI…YLMG, and LIYN…NVAV. N6-(retinylidene)lysine is present on Lys-231.

It belongs to the archaeal/bacterial/fungal opsin family. Contains one covalently linked retinal chromophore.

The protein localises to the cell membrane. Light-driven proton pump that generates photothrophic energy. In Gamma-proteobacterium EBAC31A08, this protein is Green-light absorbing proteorhodopsin.